Here is a 241-residue protein sequence, read N- to C-terminus: uncharacterized protein (241 aa).

An HTH cro/C1-type domain is found at 32–86; it reads LKKWRNLFNIQQIELAKYLNVSPSVISDYEVGRRKNPGVNIIKKYVLALIEIDKE. Positions 43-62 form a DNA-binding region, H-T-H motif; sequence QIELAKYLNVSPSVISDYEV.

This is an uncharacterized protein from Methanocaldococcus jannaschii (strain ATCC 43067 / DSM 2661 / JAL-1 / JCM 10045 / NBRC 100440) (Methanococcus jannaschii).